Reading from the N-terminus, the 240-residue chain is Large ribosomal subunit protein uL3 (240 aa).

Disordered stretches follow at residues 138 to 158 (SISH…KTFK) and 215 to 240 (EAPL…SAEG). At Q151 the chain carries N5-methylglutamine.

Belongs to the universal ribosomal protein uL3 family. Part of the 50S ribosomal subunit. Forms a cluster with proteins L14 and L19. Post-translationally, methylated by PrmB.

Functionally, one of the primary rRNA binding proteins, it binds directly near the 3'-end of the 23S rRNA, where it nucleates assembly of the 50S subunit. The sequence is that of Large ribosomal subunit protein uL3 from Beijerinckia indica subsp. indica (strain ATCC 9039 / DSM 1715 / NCIMB 8712).